Here is a 649-residue protein sequence, read N- to C-terminus: Acetyl-coenzyme A synthetase (649 aa).

CoA-binding positions include 190–193 and T310; that span reads RGGR. ATP contacts are provided by residues 386-388, 410-415, D499, and R514; these read GEP and DTWWQT. S522 provides a ligand contact to CoA. R525 contacts ATP. The Mg(2+) site is built by V536, H538, and V541. Position 583 (R583) interacts with CoA. K608 carries the post-translational modification N6-acetyllysine.

It belongs to the ATP-dependent AMP-binding enzyme family. Mg(2+) is required as a cofactor. Post-translationally, acetylated. Deacetylation by the SIR2-homolog deacetylase activates the enzyme.

It catalyses the reaction acetate + ATP + CoA = acetyl-CoA + AMP + diphosphate. In terms of biological role, catalyzes the conversion of acetate into acetyl-CoA (AcCoA), an essential intermediate at the junction of anabolic and catabolic pathways. AcsA undergoes a two-step reaction. In the first half reaction, AcsA combines acetate with ATP to form acetyl-adenylate (AcAMP) intermediate. In the second half reaction, it can then transfer the acetyl group from AcAMP to the sulfhydryl group of CoA, forming the product AcCoA. The sequence is that of Acetyl-coenzyme A synthetase from Methylorubrum populi (strain ATCC BAA-705 / NCIMB 13946 / BJ001) (Methylobacterium populi).